A 63-amino-acid chain; its full sequence is MARVCSVCGKGTTFGHNVSHSNRRTNRRWVANLKRVHGRFPDGKVRTAYVCVKCLKAGKVEIL.

This sequence belongs to the bacterial ribosomal protein bL28 family.

This Coprothermobacter proteolyticus (strain ATCC 35245 / DSM 5265 / OCM 4 / BT) protein is Large ribosomal subunit protein bL28.